A 466-amino-acid chain; its full sequence is Histidine--tRNA ligase (466 aa).

Belongs to the class-II aminoacyl-tRNA synthetase family. In terms of assembly, homodimer.

The protein localises to the cytoplasm. The catalysed reaction is tRNA(His) + L-histidine + ATP = L-histidyl-tRNA(His) + AMP + diphosphate + H(+). The protein is Histidine--tRNA ligase of Bifidobacterium longum subsp. infantis (strain ATCC 15697 / DSM 20088 / JCM 1222 / NCTC 11817 / S12).